The chain runs to 65 residues: Conopeptide Vt3.2 (65 aa).

The signal sequence occupies residues Leu1–Ala12. Residues Asp13 to His48 constitute a propeptide that is removed on maturation. At Ser64 the chain carries Serine amide.

It belongs to the conotoxin M superfamily. As to quaternary structure, homodimer; disulfide-linked. As to expression, expressed by the venom duct.

It localises to the secreted. This chain is Conopeptide Vt3.2, found in Conus planorbis (Planorbis cone).